We begin with the raw amino-acid sequence, 121 residues long: Large ribosomal subunit protein bL12 (121 aa).

The protein belongs to the bacterial ribosomal protein bL12 family. In terms of assembly, homodimer. Part of the ribosomal stalk of the 50S ribosomal subunit. Forms a multimeric L10(L12)X complex, where L10 forms an elongated spine to which 2 to 4 L12 dimers bind in a sequential fashion. Binds GTP-bound translation factors.

Functionally, forms part of the ribosomal stalk which helps the ribosome interact with GTP-bound translation factors. Is thus essential for accurate translation. The polypeptide is Large ribosomal subunit protein bL12 (Limosilactobacillus reuteri (strain DSM 20016) (Lactobacillus reuteri)).